Consider the following 175-residue polypeptide: RNA pyrophosphohydrolase (175 aa).

Residues 7-150 (GYRLNVGIIL…KRQVYIQALK (144 aa)) enclose the Nudix hydrolase domain. A Nudix box motif is present at residues 39 to 60 (GGLAPGETAMQAMYRELHEEVG).

It belongs to the Nudix hydrolase family. RppH subfamily. A divalent metal cation is required as a cofactor.

Its function is as follows. Accelerates the degradation of transcripts by removing pyrophosphate from the 5'-end of triphosphorylated RNA, leading to a more labile monophosphorylated state that can stimulate subsequent ribonuclease cleavage. The polypeptide is RNA pyrophosphohydrolase (Legionella pneumophila (strain Paris)).